The sequence spans 90 residues: MNIKPIGERVLLKPIKKEEKTKSGILLSSKSSNTDTKNEAEVVALGKGEKLEGIKVGDKVIFNKFSGNEIEDGDIKYLIVNADDILAVIE.

This sequence belongs to the GroES chaperonin family. Heptamer of 7 subunits arranged in a ring. Interacts with the chaperonin GroEL.

It is found in the cytoplasm. Together with the chaperonin GroEL, plays an essential role in assisting protein folding. The GroEL-GroES system forms a nano-cage that allows encapsulation of the non-native substrate proteins and provides a physical environment optimized to promote and accelerate protein folding. GroES binds to the apical surface of the GroEL ring, thereby capping the opening of the GroEL channel. The sequence is that of Co-chaperonin GroES from Fusobacterium nucleatum subsp. polymorphum (Fusobacterium polymorphum).